Here is a 1788-residue protein sequence, read N- to C-terminus: U3 small nucleolar RNA-associated protein 10 (1788 aa).

An HEAT 1 repeat occupies 585–622 (LDFQAVVPYAIVALSDPAKKVRRAAAELVTVLGSFYET). The interval 884-905 (PATKRRRVGSSEKSVDSQSPAD) is disordered. HEAT repeat units follow at residues 926-962 (AKHPELLPSLFTTLSELQHLRTVVGSELGYLQSLVLS), 1049-1086 (QTVKEVIPPLIETFRKSRRNLVASTAELLTSFVVAYEH), 1257-1294 (LSIAEFIKSVEALLDRPNVILRQKVLRALERRVDSESI), 1301-1339 (EALLAFLPQLTAVIRESDDMNYKHTAVNCVDKIAEKYGK), 1703-1740 (EHHKEINSALLKHLRSEQAAVRLAVIKCEQELTARLGE), and 1744-1781 (QSLPEMLPFISELQDDDDEVVERENRRWIVGIEETLGE).

Belongs to the HEATR1/UTP10 family. In terms of assembly, component of the ribosomal small subunit (SSU) processome.

The protein resides in the nucleus. It localises to the nucleolus. Functionally, involved in nucleolar processing of pre-18S ribosomal RNA. Involved in ribosome biosynthesis. This Neurospora crassa (strain ATCC 24698 / 74-OR23-1A / CBS 708.71 / DSM 1257 / FGSC 987) protein is U3 small nucleolar RNA-associated protein 10 (rbg-5).